The primary structure comprises 529 residues: Bifunctional purine biosynthesis protein PurH (529 aa).

The region spanning 1-148 (MQQRRPVRRA…KNHKDVAIVV (148 aa)) is the MGS-like domain. K287 carries the N6-acetyllysine modification.

This sequence belongs to the PurH family.

The catalysed reaction is (6R)-10-formyltetrahydrofolate + 5-amino-1-(5-phospho-beta-D-ribosyl)imidazole-4-carboxamide = 5-formamido-1-(5-phospho-D-ribosyl)imidazole-4-carboxamide + (6S)-5,6,7,8-tetrahydrofolate. The enzyme catalyses IMP + H2O = 5-formamido-1-(5-phospho-D-ribosyl)imidazole-4-carboxamide. Its pathway is purine metabolism; IMP biosynthesis via de novo pathway; 5-formamido-1-(5-phospho-D-ribosyl)imidazole-4-carboxamide from 5-amino-1-(5-phospho-D-ribosyl)imidazole-4-carboxamide (10-formyl THF route): step 1/1. It functions in the pathway purine metabolism; IMP biosynthesis via de novo pathway; IMP from 5-formamido-1-(5-phospho-D-ribosyl)imidazole-4-carboxamide: step 1/1. This chain is Bifunctional purine biosynthesis protein PurH, found in Escherichia fergusonii (strain ATCC 35469 / DSM 13698 / CCUG 18766 / IAM 14443 / JCM 21226 / LMG 7866 / NBRC 102419 / NCTC 12128 / CDC 0568-73).